Here is a 198-residue protein sequence, read N- to C-terminus: Recombination protein RecR (198 aa).

A C4-type zinc finger spans residues C57–C72. The 96-residue stretch at S80–P175 folds into the Toprim domain.

The protein belongs to the RecR family.

May play a role in DNA repair. It seems to be involved in an RecBC-independent recombinational process of DNA repair. It may act with RecF and RecO. This Brevibacillus brevis (strain 47 / JCM 6285 / NBRC 100599) protein is Recombination protein RecR.